Consider the following 707-residue polypeptide: ATP-dependent RNA helicase DHX33 (707 aa).

The disordered stretch occupies residues 1–64 (MPEEAGFPPA…LAQPSASPYP (64 aa)). The tract at residues 1–80 (MPEEAGFPPA…RRSLPIFQAR (80 aa)) is required for nucleolar location. The span at 39 to 49 (GSGGRGGGGGR) shows a compositional bias: gly residues. Over residues 50 to 64 (RQQPPLAQPSASPYP) the composition is skewed to low complexity. A Helicase ATP-binding domain is found at 84–252 (LAQLRNLDNA…FNGAPVLYLE (169 aa)). Residue 97 to 104 (GETGSGKT) coordinates ATP. Positions 194–197 (DEAH) match the DEAH box motif. Positions 277 to 450 (SVFQIHQEAP…SVMLQLLAMK (174 aa)) constitute a Helicase C-terminal domain. Positions 471–562 (AIAQLDLLGA…ISSEGDHMTL (92 aa)) are HA2; required for interaction with EIF3G and RPL26. A Critical for rDNA-binding motif is present at residues 547 to 558 (GVRKKFISSEGD).

This sequence belongs to the DEAD box helicase family. DEAH subfamily. As to quaternary structure, interacts with UBTF. Interacts with DDX3X, EIF3G and EIF3H; the interaction is independent of RNA. Interacts (via HA2 region and Helicase C-terminal domain) with the components of the large ribosomal subunit RPL3, RPL7, RPL26 and RPL27. Interacts (via DEAH box) with NLRP3 (via NACHT domain). Binds to mRNA. Binds to double-stranded RNA (via the helicase C-terminal domain). Interacts (via the helicase C-terminal domain) with MAVS. Ubiquitinated, leading to its degradation by the proteasome. Deubiquitinated by USP36.

It is found in the nucleus. It localises to the nucleolus. The protein localises to the nucleoplasm. The protein resides in the cytoplasm. Its subcellular location is the inflammasome. The catalysed reaction is ATP + H2O = ADP + phosphate + H(+). Its function is as follows. Implicated in nucleolar organization, ribosome biogenesis, protein synthesis and cytoplasmic dsRNA sensing. Stimulates RNA polymerase I transcription of the 47S precursor rRNA. Associates with ribosomal DNA (rDNA) loci where it is involved in POLR1A recruitment. In the cytoplasm, promotes elongation-competent 80S ribosome assembly at the late stage of mRNA translation initiation. Senses cytosolic dsRNA mediating NLRP3 inflammasome formation in macrophages and type I interferon production in myeloid dendritic cells. Required for NLRP3 activation induced by viral dsRNA and bacterial RNA. In dendritic cells, required for induction of type I interferon production induced by cytoplasmic dsRNA via the activation of MAPK and NF-kappa-B signaling pathways. In Homo sapiens (Human), this protein is ATP-dependent RNA helicase DHX33.